Reading from the N-terminus, the 347-residue chain is Sensor protein VraS (347 aa).

2 helical membrane-spanning segments follow: residues 13 to 33 (ILVY…VNII) and 43 to 63 (IFGI…CIIV). Positions 150-341 (RLARELHDSV…RIEVKAPLNK (192 aa)) constitute a Histidine kinase domain. The residue at position 156 (histidine 156) is a Phosphohistidine.

In terms of processing, autophosphorylated on His-156.

The protein localises to the cell membrane. The catalysed reaction is ATP + protein L-histidine = ADP + protein N-phospho-L-histidine.. Its function is as follows. Member of the two-component regulatory system PprA/PprB involved in biofilm formation by controlling the expression of many related genes including type IVb pili major subunit flp pilin, adhesin bapA or cupE fimbriae. Also modulates quorum-sensing signal production acting on both negative and positive modulators. Functions as a heme sensor histidine kinase which is autophosphorylated at a histidine residue and transfers its phosphate group to PprB. This chain is Sensor protein VraS (vraS), found in Staphylococcus aureus (strain Mu3 / ATCC 700698).